Here is a 609-residue protein sequence, read N- to C-terminus: DNA mismatch repair protein MutL (609 aa).

The protein belongs to the DNA mismatch repair MutL/HexB family.

Its function is as follows. This protein is involved in the repair of mismatches in DNA. It is required for dam-dependent methyl-directed DNA mismatch repair. May act as a 'molecular matchmaker', a protein that promotes the formation of a stable complex between two or more DNA-binding proteins in an ATP-dependent manner without itself being part of a final effector complex. This is DNA mismatch repair protein MutL from Rickettsia felis (strain ATCC VR-1525 / URRWXCal2) (Rickettsia azadi).